A 249-amino-acid chain; its full sequence is Protein twisted gastrulation (249 aa).

The first 23 residues, 1 to 23, serve as a signal peptide directing secretion; sequence MQLLCYFVILFVGIAPWSSLAND. N-linked (GlcNAc...) asparagine glycosylation is present at N199.

The protein belongs to the twisted gastrulation protein family. Component of a complex composed of dpp, sog and tsg. As to expression, first appears in stage 4 embryos, expressed in two domains: a broad mid-dorsal saddle and an anterior cap, expression between the domains is continuous across the dorsal midline. At stage 5, expression is refined into 4 graded stripes in the mid-dorsal region and a paired domain in the anterior region. During stages 7 and 8, anterior expression fades and the mid dorsal stripes are located between the anterior and posterior transverse furrow (ATF and PTF). Expressing cells become incorporated into the deepening PTF.

It is found in the secreted. In terms of biological role, involved in dorsal-ventral patterning. Required for specification of a narrow strip of dorsal midline cells that will give rise to the amnioserosa, but not for specification of dorsal ectoderm cells. Inhibits BMP signaling; enhances the binding of sog to dpp, thus enhancing the antagonistic activity of sog. This is Protein twisted gastrulation (tsg) from Drosophila melanogaster (Fruit fly).